A 162-amino-acid polypeptide reads, in one-letter code: Inorganic pyrophosphatase (162 aa).

Glu8 serves as a coordination point for Mg(2+). Substrate-binding residues include Lys16, Arg30, and Tyr42. Residues Asp52, Asp57, Asp84, and Asp89 each contribute to the Mg(2+) site. Asp89 serves as the catalytic Proton acceptor. Residue Tyr126 participates in substrate binding.

Belongs to the PPase family. As to quaternary structure, homohexamer. Mg(2+) is required as a cofactor.

The protein localises to the cytoplasm. It catalyses the reaction diphosphate + H2O = 2 phosphate + H(+). Functionally, catalyzes the hydrolysis of inorganic pyrophosphate (PPi) forming two phosphate ions. This chain is Inorganic pyrophosphatase, found in Mycobacterium bovis (strain ATCC BAA-935 / AF2122/97).